A 169-amino-acid polypeptide reads, in one-letter code: Ribosome maturation factor RimM (169 aa).

In terms of domain architecture, PRC barrel spans 94 to 168 (DDEFYHADLI…RIVADPPEGL (75 aa)).

The protein belongs to the RimM family. In terms of assembly, binds ribosomal protein uS19.

The protein localises to the cytoplasm. Its function is as follows. An accessory protein needed during the final step in the assembly of 30S ribosomal subunit, possibly for assembly of the head region. Essential for efficient processing of 16S rRNA. May be needed both before and after RbfA during the maturation of 16S rRNA. It has affinity for free ribosomal 30S subunits but not for 70S ribosomes. In Cereibacter sphaeroides (strain ATCC 17023 / DSM 158 / JCM 6121 / CCUG 31486 / LMG 2827 / NBRC 12203 / NCIMB 8253 / ATH 2.4.1.) (Rhodobacter sphaeroides), this protein is Ribosome maturation factor RimM.